The following is a 223-amino-acid chain: MEDVKLQFPSLPLCKEEAEDWAYPMRREMQEILPGLFLGPYSAAMKSKLSVFQKCGITHVICIRQNIEANFIKPNFQQLFRYLVLDIADNPVENIIRFFPMSKEFIDGCLQTGGKVLIHGNAGISRSAALVIAYIMETFGIKYRDAFTYVQERRFCINPNAGFVHQLQEYEAIYLAKLTIKMMSPLQLGRPLCIQSGATGSLKRTLDDEDELGNMQVSAAHEG.

One can recognise a Tyrosine-protein phosphatase domain in the interval 28-176 (EMQEILPGLF…LQEYEAIYLA (149 aa)).

The protein belongs to the protein-tyrosine phosphatase family. Non-receptor class subfamily.

Functionally, catalytically inactive phosphatase. This Xenopus laevis (African clawed frog) protein is Serine/threonine/tyrosine-interacting protein A (styx-a).